Here is a 269-residue protein sequence, read N- to C-terminus: Putative hydro-lyase Aave_3512 (269 aa).

This sequence belongs to the D-glutamate cyclase family.

This is Putative hydro-lyase Aave_3512 from Paracidovorax citrulli (strain AAC00-1) (Acidovorax citrulli).